Consider the following 591-residue polypeptide: Reduced folate transporter (591 aa).

Residue M1 is modified to N-acetylmethionine. Residues 1 to 29 are Cytoplasmic-facing; sequence MVPSSPAVEKQVPVEPGPDPELRSWRHLV. The residue at position 5 (S5) is a Phosphoserine. A helical transmembrane segment spans residues 30–50; that stretch reads CYLCFYGFMAQIRPGESFITP. Residues I48 and T49 each coordinate folate. The Extracellular segment spans residues 51-64; it reads YLLGPDKNFTREQV. A glycan (N-linked (GlcNAc...) asparagine) is linked at N58. Residues 65–87 form a helical membrane-spanning segment; it reads TNEITPVLSYSYLAVLVPVFLLT. At 88–91 the chain is on the cytoplasmic side; the sequence is DYLR. The chain crosses the membrane as a helical span at residues 92–112; the sequence is YTPVLLLQGLSFVSVWLLLLL. Residues 113–116 are Extracellular-facing; sequence GHSV. Residues 117–139 traverse the membrane as a helical segment; it reads AHMQLMELFYSVTMAARIAYSSY. The folate site is built by E123 and R133. Residues R133, I134, S137, Y149, and R157 each contribute to the 2',3'-cGAMP site. The Cytoplasmic segment spans residues 140–153; sequence IFSLVRPARYQRVA. A helical membrane pass occupies residues 154-178; that stretch reads GYSRAAVLLGVFTSSVLGQLLVTVG. A folate-binding site is contributed by V164. Topologically, residues 179-183 are extracellular; that stretch reads RVSFS. A helical membrane pass occupies residues 184-202; sequence TLNYISLAFLTFSVVLALF. The Cytoplasmic segment spans residues 203-266; the sequence is LKRPKRSLFF…ELGDSLRRPQ (64 aa). The residue at position 225 (S225) is a Phosphoserine. A helical membrane pass occupies residues 267-292; the sequence is LRLWSLWWVFNSAGYYLVVYYVHILW. Folate-binding residues include Y281, Y282, and Y286. Y282 contributes to the 2',3'-cGAMP binding site. Over 293 to 304 the chain is Extracellular; sequence NEVDPTTNSARV. Residues 305–327 traverse the membrane as a helical segment; it reads YNGAADAASTLLGAITSFAAGFV. A 2',3'-cGAMP-binding site is contributed by S321. The Cytoplasmic portion of the chain corresponds to 328–333; it reads KIRWAR. Residues 334–354 traverse the membrane as a helical segment; sequence WSKLLIAGVTATQAGLVFLLA. Over 355–360 the chain is Extracellular; sequence HTRHPS. A helical membrane pass occupies residues 361–384; the sequence is SIWLCYAAFVLFRGSYQFLVPIAT. Folate-binding residues include R373 and Q377. 2',3'-cGAMP-binding residues include Q377, P381, T384, K393, C396, and F400. Residues 385–398 are Cytoplasmic-facing; the sequence is FQIASSLSKELCAL. A helical membrane pass occupies residues 399-422; the sequence is VFGVNTFFATIVKTIITFIVSDVR. A required for substrate-binding region spans residues 407–419; that stretch reads ATIVKTIITFIVS. Residues 423–430 are Extracellular-facing; it reads GLGLPVRK. Residues 431–455 form a helical membrane-spanning segment; it reads QFQLYSVYFLILSIIYFLGAMLDGL. The Cytoplasmic portion of the chain corresponds to 456-591; it reads RHCQRGHHPR…PSDGVQNVNQ (136 aa). S474, S485, S499, and S503 each carry phosphoserine.

Belongs to the reduced folate carrier (RFC) transporter (TC 2.A.48) family. In terms of tissue distribution, placenta, liver, and to a much smaller extent, in lung.

The protein resides in the cell membrane. It localises to the apical cell membrane. Its subcellular location is the basolateral cell membrane. It carries out the reaction 5-amino-1-(5-phospho-beta-D-ribosyl)imidazole-4-carboxamide(in) + (6S)-5-methyl-5,6,7,8-tetrahydrofolate(out) = 5-amino-1-(5-phospho-beta-D-ribosyl)imidazole-4-carboxamide(out) + (6S)-5-methyl-5,6,7,8-tetrahydrofolate(in). The enzyme catalyses 2',3'-cGAMP(out) + 5-amino-1-(5-phospho-beta-D-ribosyl)imidazole-4-carboxamide(in) = 2',3'-cGAMP(in) + 5-amino-1-(5-phospho-beta-D-ribosyl)imidazole-4-carboxamide(out). The catalysed reaction is 3',3'-cGAMP(out) + 5-amino-1-(5-phospho-beta-D-ribosyl)imidazole-4-carboxamide(in) = 3',3'-cGAMP(in) + 5-amino-1-(5-phospho-beta-D-ribosyl)imidazole-4-carboxamide(out). Antiporter that mediates the import of reduced folates or a subset of cyclic dinucleotides, driven by the export of organic anions. Acts as an importer of immunoreactive cyclic dinucleotides, such as cyclic GMP-AMP (2'-3'-cGAMP), an immune messenger produced in response to DNA virus in the cytosol, and its linkage isomer 3'-3'-cGAMP, thus playing a role in triggering larger immune responses. Mechanistically, acts as a secondary active transporter, which exports intracellular organic anions down their concentration gradients to facilitate the uptake of its substrates. Has high affinity for N5-methyltetrahydrofolate, the predominant circulating form of folate. Also mediates the import of antifolate drug methotrexate. 5-amino-4-imidazolecarboxamide riboside (AICAR), when phosphorylated to AICAR monophosphate, can serve as an organic anion for antiporter activity. The protein is Reduced folate transporter of Homo sapiens (Human).